The following is a 345-amino-acid chain: Centromere protein U (345 aa).

2 stretches are compositionally biased toward basic residues: residues 1–10 (MSSKKRTKRN) and 19–29 (HKGRSHPRRKF). Disordered regions lie at residues 1–37 (MSSK…EPDV) and 64–153 (AVDA…SSVQ). A compositionally biased stretch (basic and acidic residues) spans 88 to 106 (NAERSEKMLLETPEGDVHE). Positions 142-152 (SDSSVNSPSSV) are enriched in low complexity. A coiled-coil region spans residues 201–294 (CSAFEDQVTD…QDYLDYREEN (94 aa)). A Nuclear localization signal motif is present at residues 222–239 (KKKNAKVVADIKKKRQRL).

It belongs to the CENP-U/AME1 family. Interacts with CENPH-CENPI complex at the kinetochore.

Its subcellular location is the nucleus. It is found in the chromosome. The protein localises to the centromere. In terms of biological role, probable component of a centromeric complex involved in assembly of kinetochore proteins, mitotic progression and chromosome segregation. Required for maintenance of sister chromatid adhesion during mitotic checkpoint activation. This Gallus gallus (Chicken) protein is Centromere protein U (CENPU).